A 523-amino-acid chain; its full sequence is Bifunctional purine biosynthesis protein PurH (523 aa).

An MGS-like domain is found at 4–152; it reads DHIRRPIRRA…KNHPSVAVVT (149 aa).

This sequence belongs to the PurH family.

It carries out the reaction (6R)-10-formyltetrahydrofolate + 5-amino-1-(5-phospho-beta-D-ribosyl)imidazole-4-carboxamide = 5-formamido-1-(5-phospho-D-ribosyl)imidazole-4-carboxamide + (6S)-5,6,7,8-tetrahydrofolate. The catalysed reaction is IMP + H2O = 5-formamido-1-(5-phospho-D-ribosyl)imidazole-4-carboxamide. Its pathway is purine metabolism; IMP biosynthesis via de novo pathway; 5-formamido-1-(5-phospho-D-ribosyl)imidazole-4-carboxamide from 5-amino-1-(5-phospho-D-ribosyl)imidazole-4-carboxamide (10-formyl THF route): step 1/1. The protein operates within purine metabolism; IMP biosynthesis via de novo pathway; IMP from 5-formamido-1-(5-phospho-D-ribosyl)imidazole-4-carboxamide: step 1/1. The protein is Bifunctional purine biosynthesis protein PurH of Mycobacterium ulcerans (strain Agy99).